Consider the following 52-residue polypeptide: Defensin D2 (52 aa).

Disulfide bonds link Cys-8/Cys-52, Cys-19/Cys-39, Cys-25/Cys-46, and Cys-29/Cys-48.

Distributed in the epidermal cell layer of leaves and in the subepidermal layer region of stems. Not in roots.

The protein localises to the secreted. Its subcellular location is the cell wall. Its function is as follows. Antimicrobial peptide. Active against Fusarium spp., Gram-positive and Gram-negative bacterial pathogens. The protein is Defensin D2 of Spinacia oleracea (Spinach).